Here is a 115-residue protein sequence, read N- to C-terminus: Cholecystokinin (115 aa).

The N-terminal stretch at 1–20 (MKSGVCLCVVMAVLAAGALA) is a signal peptide. Residues 21–70 (QPVVPAEATDPVEQRAQEAPRRQLRAVLRTDGEPRARLGALLARYIQQVR) constitute a propeptide that is removed on maturation. Position 97 is a sulfotyrosine (Tyr97). Phe103 carries the phenylalanine amide modification. Positions 107–115 (SAEDYEYPS) are excised as a propeptide. Sulfotyrosine occurs at positions 111 and 113.

The protein belongs to the gastrin/cholecystokinin family. In terms of assembly, binds to CCK-A receptors in the pancreas and CCK-B receptors in the brain. Post-translationally, the precursor is cleaved by proteases to produce a number of active cholecystokinins. As to expression, expressed and secreted by discrete enteroendocrine cells that reside as single cells scattered among enterocytes in the mucosa of the small intestine. Released into the blood following ingestion of a meal.

The protein localises to the secreted. Functionally, this peptide hormone induces gall bladder contraction and the release of pancreatic enzymes in the gut. Its function in the brain is not clear. Binding to CCK-A receptors stimulates amylase release from the pancreas, binding to CCK-B receptors stimulates gastric acid secretion. The sequence is that of Cholecystokinin (Cck) from Mus musculus (Mouse).